The sequence spans 161 residues: Ribosome maturation factor RimP (161 aa).

Belongs to the RimP family.

The protein localises to the cytoplasm. In terms of biological role, required for maturation of 30S ribosomal subunits. In Pelobacter propionicus (strain DSM 2379 / NBRC 103807 / OttBd1), this protein is Ribosome maturation factor RimP.